Consider the following 342-residue polypeptide: Ferredoxin--NADP reductase (342 aa).

Residues C17, D36, Q44, Y49, I89, F124, D289, and T330 each coordinate FAD.

This sequence belongs to the ferredoxin--NADP reductase type 2 family. In terms of assembly, homodimer. FAD is required as a cofactor.

It carries out the reaction 2 reduced [2Fe-2S]-[ferredoxin] + NADP(+) + H(+) = 2 oxidized [2Fe-2S]-[ferredoxin] + NADPH. This is Ferredoxin--NADP reductase from Rhodopseudomonas palustris (strain BisB18).